The following is a 150-amino-acid chain: UPF0178 protein HCH_06960 (150 aa).

The protein belongs to the UPF0178 family.

The polypeptide is UPF0178 protein HCH_06960 (Hahella chejuensis (strain KCTC 2396)).